A 308-amino-acid polypeptide reads, in one-letter code: tRNA dimethylallyltransferase (308 aa).

14–21 (GPTASGKT) provides a ligand contact to ATP. Position 16 to 21 (16 to 21 (TASGKT)) interacts with substrate. Interaction with substrate tRNA stretches follow at residues 39–42 (DSAL), 163–167 (QRLSR), and 244–249 (RCVGYR).

The protein belongs to the IPP transferase family. In terms of assembly, monomer. The cofactor is Mg(2+).

It catalyses the reaction adenosine(37) in tRNA + dimethylallyl diphosphate = N(6)-dimethylallyladenosine(37) in tRNA + diphosphate. Catalyzes the transfer of a dimethylallyl group onto the adenine at position 37 in tRNAs that read codons beginning with uridine, leading to the formation of N6-(dimethylallyl)adenosine (i(6)A). This is tRNA dimethylallyltransferase from Shewanella loihica (strain ATCC BAA-1088 / PV-4).